A 79-amino-acid polypeptide reads, in one-letter code: Cell division protein ZapB (79 aa).

Residues E4–E78 adopt a coiled-coil conformation.

It belongs to the ZapB family. Homodimer. The ends of the coiled-coil dimer bind to each other, forming polymers. Interacts with FtsZ.

It is found in the cytoplasm. In terms of biological role, non-essential, abundant cell division factor that is required for proper Z-ring formation. It is recruited early to the divisome by direct interaction with FtsZ, stimulating Z-ring assembly and thereby promoting cell division earlier in the cell cycle. Its recruitment to the Z-ring requires functional FtsA or ZipA. The protein is Cell division protein ZapB of Pectobacterium carotovorum subsp. carotovorum (strain PC1).